The following is a 733-amino-acid chain: Fibronectin type III domain-containing protein 7 (733 aa).

A signal peptide spans 1-25 (MAGGRETCLPLIGFILICLKMVASA). 8 Fibronectin type-III domains span residues 28–115 (APEI…TVLA), 116–202 (APIL…TSPR), 203–288 (APAN…TVAC), 289–373 (APGR…TAPC), 374–459 (CPSD…TAPC), 460–544 (SPEI…TVPC), 545–632 (CPTG…CCPL), and 631–715 (PLGV…YSVT). N-linked (GlcNAc...) asparagine glycosylation occurs at Asn-230. The N-linked (GlcNAc...) asparagine glycan is linked to Asn-433.

It is found in the secreted. The sequence is that of Fibronectin type III domain-containing protein 7 (FNDC7) from Homo sapiens (Human).